Consider the following 310-residue polypeptide: Serine/threonine-protein kinase pim-2 (310 aa).

In terms of domain architecture, Protein kinase spans 30-290; that stretch reads YTMGNLLGSG…LEQILQHPWM (261 aa). Residues 36–44 and Lys59 contribute to the ATP site; that span reads LGSGGFGSV. The Proton acceptor role is filled by Asp167.

It belongs to the protein kinase superfamily. CAMK Ser/Thr protein kinase family. PIM subfamily. Autophosphorylated.

It carries out the reaction L-seryl-[protein] + ATP = O-phospho-L-seryl-[protein] + ADP + H(+). The catalysed reaction is L-threonyl-[protein] + ATP = O-phospho-L-threonyl-[protein] + ADP + H(+). In terms of biological role, proto-oncogene with serine/threonine kinase activity involved in cell survival and cell proliferation. The sequence is that of Serine/threonine-protein kinase pim-2 (pim2) from Danio rerio (Zebrafish).